A 98-amino-acid polypeptide reads, in one-letter code: NADH-ubiquinone oxidoreductase chain 4L (98 aa).

3 helical membrane passes run 1–21 (MAPINLNLILAFSLALLGVLI), 28–48 (STLLCLEGMMLSLFILMTLLI), and 59–79 (APLILLVFSACEAGVGLALLV).

This sequence belongs to the complex I subunit 4L family. Core subunit of respiratory chain NADH dehydrogenase (Complex I) which is composed of 45 different subunits.

The protein localises to the mitochondrion inner membrane. It catalyses the reaction a ubiquinone + NADH + 5 H(+)(in) = a ubiquinol + NAD(+) + 4 H(+)(out). Functionally, core subunit of the mitochondrial membrane respiratory chain NADH dehydrogenase (Complex I) which catalyzes electron transfer from NADH through the respiratory chain, using ubiquinone as an electron acceptor. Part of the enzyme membrane arm which is embedded in the lipid bilayer and involved in proton translocation. The chain is NADH-ubiquinone oxidoreductase chain 4L (MT-ND4L) from Perameles gunnii (Eastern barred bandicoot).